A 59-amino-acid polypeptide reads, in one-letter code: uncharacterized protein (59 aa).

This is an uncharacterized protein from Caenorhabditis elegans.